The chain runs to 310 residues: Putative methyltransferase mtx subunit H (310 aa).

The protein belongs to the MtrH family. As to quaternary structure, may be part of a complex composed of 3 subunits; MtxA, MtxH and MtxX.

This chain is Putative methyltransferase mtx subunit H (mtxH), found in Methanosarcina acetivorans (strain ATCC 35395 / DSM 2834 / JCM 12185 / C2A).